The chain runs to 258 residues: tRNA pseudouridine synthase A (258 aa).

Residue D55 is the Nucleophile of the active site. Y113 is a substrate binding site.

This sequence belongs to the tRNA pseudouridine synthase TruA family. As to quaternary structure, homodimer.

It catalyses the reaction uridine(38/39/40) in tRNA = pseudouridine(38/39/40) in tRNA. In terms of biological role, formation of pseudouridine at positions 38, 39 and 40 in the anticodon stem and loop of transfer RNAs. The protein is tRNA pseudouridine synthase A of Limosilactobacillus fermentum (strain NBRC 3956 / LMG 18251) (Lactobacillus fermentum).